The following is a 375-amino-acid chain: Probable neutral protease 2 homolog ARB_05817 (375 aa).

A signal peptide spans 1–19 (MQVIVALAALGSLAAPALG). The propeptide occupies 20–189 (FSIPRGVPVS…RGPLTRINKR (170 aa)). 2 cysteine pairs are disulfide-bonded: Cys-197–Cys-267 and Cys-274–Cys-292. His-317 is a binding site for Zn(2+). Glu-318 is a catalytic residue. Zn(2+) is bound by residues His-321 and Asp-332.

It belongs to the peptidase M35 family. Zn(2+) serves as cofactor.

The protein resides in the secreted. The enzyme catalyses Preferential cleavage of bonds with hydrophobic residues in P1'. Also 3-Asn-|-Gln-4 and 8-Gly-|-Ser-9 bonds in insulin B chain.. Functionally, probable secreted metalloprotease that shows high activities on basic nuclear substrates such as histone and protamine. May be involved in virulence. This is Probable neutral protease 2 homolog ARB_05817 from Arthroderma benhamiae (strain ATCC MYA-4681 / CBS 112371) (Trichophyton mentagrophytes).